Reading from the N-terminus, the 324-residue chain is Beta-ketoacyl-[acyl-carrier-protein] synthase III (324 aa).

Residues Cys114 and His251 contribute to the active site. Positions 252–256 are ACP-binding; the sequence is QANKR. Asn281 is a catalytic residue.

It belongs to the thiolase-like superfamily. FabH family. In terms of assembly, homodimer.

The protein resides in the cytoplasm. It catalyses the reaction malonyl-[ACP] + acetyl-CoA + H(+) = 3-oxobutanoyl-[ACP] + CO2 + CoA. It participates in lipid metabolism; fatty acid biosynthesis. Functionally, catalyzes the condensation reaction of fatty acid synthesis by the addition to an acyl acceptor of two carbons from malonyl-ACP. Catalyzes the first condensation reaction which initiates fatty acid synthesis and may therefore play a role in governing the total rate of fatty acid production. Possesses both acetoacetyl-ACP synthase and acetyl transacylase activities. Its substrate specificity determines the biosynthesis of branched-chain and/or straight-chain of fatty acids. This is Beta-ketoacyl-[acyl-carrier-protein] synthase III from Bradyrhizobium sp. (strain BTAi1 / ATCC BAA-1182).